The primary structure comprises 336 residues: Anthranilate phosphoribosyltransferase (336 aa).

5-phospho-alpha-D-ribose 1-diphosphate is bound by residues G78, 81 to 82 (GD), T86, 88 to 91 (NVST), 106 to 114 (KHGNYSVSS), and S118. G78 contributes to the anthranilate binding site. S90 lines the Mg(2+) pocket. Anthranilate is bound at residue N109. Anthranilate is bound at residue R164. Residues D222 and E223 each coordinate Mg(2+).

Belongs to the anthranilate phosphoribosyltransferase family. Homodimer. Requires Mg(2+) as cofactor.

The catalysed reaction is N-(5-phospho-beta-D-ribosyl)anthranilate + diphosphate = 5-phospho-alpha-D-ribose 1-diphosphate + anthranilate. It functions in the pathway amino-acid biosynthesis; L-tryptophan biosynthesis; L-tryptophan from chorismate: step 2/5. Functionally, catalyzes the transfer of the phosphoribosyl group of 5-phosphorylribose-1-pyrophosphate (PRPP) to anthranilate to yield N-(5'-phosphoribosyl)-anthranilate (PRA). This Halobacterium salinarum (strain ATCC 29341 / DSM 671 / R1) protein is Anthranilate phosphoribosyltransferase.